The primary structure comprises 1173 residues: Pleckstrin homology domain-containing family A member 6 (1173 aa).

Residues 1–22 show a composition bias toward polar residues; the sequence is MSNKTGGKRSATINSDIANHNM. Positions 1 to 39 are disordered; that stretch reads MSNKTGGKRSATINSDIANHNMVSEVPPERPNIRATRTS. One can recognise a PH domain in the interval 59-158; it reads PVTKAGWLYK…WIQAMGEAAR (100 aa). The disordered stretch occupies residues 163 to 346; the sequence is PAQKSVPQPV…PSRFYPMPRR (184 aa). Residues 201–233 are compositionally biased toward basic and acidic residues; that stretch reads LEPEAKTRGEGDGRGCEKAERRPERPEVKKETL. A phosphoserine mark is found at S247 and S251. 2 stretches are compositionally biased toward polar residues: residues 270–281 and 311–322; these read NGWQYSSPSRPG and RKSSMNQLQQWV. A phosphoserine mark is found at S314, S459, S461, and S472. Y492 carries the phosphotyrosine modification. Phosphoserine is present on S665. Disordered stretches follow at residues 737-872 and 888-984; these read RKNN…PRDI and ALNK…RPAY. Low complexity-rich tracts occupy residues 761 to 782 and 789 to 799; these read SSNS…SPFS and GSPTKPGSSEE. Residues 815 to 824 are compositionally biased toward pro residues; the sequence is ESPPTVPPLP. A Phosphoserine modification is found at S864. Phosphothreonine is present on T868. S901 is modified (phosphoserine). The residue at position 908 (T908) is a Phosphothreonine. The span at 915–926 shows a compositional bias: polar residues; sequence RTTNGLTNGLSS. Residue S925 is modified to Phosphoserine. Basic and acidic residues predominate over residues 940–952; sequence GKVKMSVEEQMDR. Over residues 953-967 the composition is skewed to basic residues; that stretch reads MRRHQSGSMKEKRRS. Residues S973, S979, and S992 each carry the phosphoserine modification. T1045 bears the Phosphothreonine mark. S1065 carries the phosphoserine modification. Disordered regions lie at residues 1093-1114 and 1130-1173; these read PIGE…QEQE and RGRM…TMRV. T1140 carries the post-translational modification Phosphothreonine. A compositionally biased stretch (pro residues) spans 1141–1155; the sequence is PSPPTSPASPTPPVN. At S1142 the chain carries Phosphoserine. T1145 is subject to Phosphothreonine. Phosphoserine is present on residues S1146 and S1149. A Phosphothreonine modification is found at T1151.

The sequence is that of Pleckstrin homology domain-containing family A member 6 (Plekha6) from Mus musculus (Mouse).